We begin with the raw amino-acid sequence, 244 residues long: Phosphoadenosine 5'-phosphosulfate reductase (244 aa).

C239 functions as the Nucleophile; cysteine thiosulfonate intermediate in the catalytic mechanism.

This sequence belongs to the PAPS reductase family. CysH subfamily.

The protein resides in the cytoplasm. It catalyses the reaction [thioredoxin]-disulfide + sulfite + adenosine 3',5'-bisphosphate + 2 H(+) = [thioredoxin]-dithiol + 3'-phosphoadenylyl sulfate. It participates in sulfur metabolism; hydrogen sulfide biosynthesis; sulfite from sulfate: step 3/3. Functionally, catalyzes the formation of sulfite from phosphoadenosine 5'-phosphosulfate (PAPS) using thioredoxin as an electron donor. This chain is Phosphoadenosine 5'-phosphosulfate reductase, found in Shigella dysenteriae serotype 1 (strain Sd197).